The primary structure comprises 391 residues: Terminal nucleotidyltransferase 5C (391 aa).

Belongs to the TENT family. In terms of assembly, interacts with BCCIP and PABPC1; the interaction has no effect on TENT5C poly(A) polymerase function. Interacts with PLK4; this interaction leads to the TENT5C recruitment into the centrosome. Expressed by splenocytes, expression is increased in activated splenocytes.

It localises to the nucleus. It is found in the cytoplasm. The protein resides in the cytoskeleton. Its subcellular location is the microtubule organizing center. The protein localises to the centrosome. The enzyme catalyses RNA(n) + ATP = RNA(n)-3'-adenine ribonucleotide + diphosphate. Functionally, catalyzes the transfer of one adenosine molecule from an ATP to an mRNA poly(A) tail bearing a 3'-OH terminal group and enhances mRNA stability and gene expression. Can also elongate RNA oligos ending with uridine molecule, provided that the sequence is adenosine-rich. Mainly targets mRNAs encoding endoplasmic reticulum-targeted protein. This chain is Terminal nucleotidyltransferase 5C, found in Mus musculus (Mouse).